A 464-amino-acid polypeptide reads, in one-letter code: V-type ATP synthase beta chain (464 aa).

This sequence belongs to the ATPase alpha/beta chains family.

In terms of biological role, produces ATP from ADP in the presence of a proton gradient across the membrane. The V-type beta chain is a regulatory subunit. This is V-type ATP synthase beta chain from Streptococcus gordonii (strain Challis / ATCC 35105 / BCRC 15272 / CH1 / DL1 / V288).